The chain runs to 75 residues: MGSFSIWHWLIVLVIVLLVFGTKRLTSGAKDLGSAVKEFKKGMHDDDKPAGKLGDDSRSAEQAREAQAERDRDAR.

A helical transmembrane segment spans residues 1–21 (MGSFSIWHWLIVLVIVLLVFG). The disordered stretch occupies residues 41–75 (KGMHDDDKPAGKLGDDSRSAEQAREAQAERDRDAR).

It belongs to the TatA/E family. As to quaternary structure, the Tat system comprises two distinct complexes: a TatABC complex, containing multiple copies of TatA, TatB and TatC subunits, and a separate TatA complex, containing only TatA subunits. Substrates initially bind to the TatABC complex, which probably triggers association of the separate TatA complex to form the active translocon.

It localises to the cell inner membrane. Its function is as follows. Part of the twin-arginine translocation (Tat) system that transports large folded proteins containing a characteristic twin-arginine motif in their signal peptide across membranes. TatA could form the protein-conducting channel of the Tat system. The chain is Sec-independent protein translocase protein TatA from Xanthomonas campestris pv. campestris (strain 8004).